Here is a 435-residue protein sequence, read N- to C-terminus: 3-phosphoshikimate 1-carboxyvinyltransferase (435 aa).

The 3-phosphoshikimate site is built by Lys15, Ser16, and Arg20. Position 15 (Lys15) interacts with phosphoenolpyruvate. Phosphoenolpyruvate contacts are provided by Gly96 and Arg124. 3-phosphoshikimate contacts are provided by Ser169, Gln171, Ser195, Asp318, and Lys345. Gln171 contacts phosphoenolpyruvate. Catalysis depends on Asp318, which acts as the Proton acceptor. Phosphoenolpyruvate contacts are provided by Arg349 and Arg393.

It belongs to the EPSP synthase family. In terms of assembly, monomer.

It localises to the cytoplasm. It carries out the reaction 3-phosphoshikimate + phosphoenolpyruvate = 5-O-(1-carboxyvinyl)-3-phosphoshikimate + phosphate. It participates in metabolic intermediate biosynthesis; chorismate biosynthesis; chorismate from D-erythrose 4-phosphate and phosphoenolpyruvate: step 6/7. Functionally, catalyzes the transfer of the enolpyruvyl moiety of phosphoenolpyruvate (PEP) to the 5-hydroxyl of shikimate-3-phosphate (S3P) to produce enolpyruvyl shikimate-3-phosphate and inorganic phosphate. In Chlorobium chlorochromatii (strain CaD3), this protein is 3-phosphoshikimate 1-carboxyvinyltransferase.